The primary structure comprises 180 residues: ATP synthase subunit b 2 (180 aa).

The helical transmembrane segment at 33–53 (IFWLLVTLVAIYFLLTRVALP) threads the bilayer.

This sequence belongs to the ATPase B chain family. As to quaternary structure, F-type ATPases have 2 components, F(1) - the catalytic core - and F(0) - the membrane proton channel. F(1) has five subunits: alpha(3), beta(3), gamma(1), delta(1), epsilon(1). F(0) has three main subunits: a(1), b(2) and c(10-14). The alpha and beta chains form an alternating ring which encloses part of the gamma chain. F(1) is attached to F(0) by a central stalk formed by the gamma and epsilon chains, while a peripheral stalk is formed by the delta and b chains.

The protein localises to the cell inner membrane. Functionally, f(1)F(0) ATP synthase produces ATP from ADP in the presence of a proton or sodium gradient. F-type ATPases consist of two structural domains, F(1) containing the extramembraneous catalytic core and F(0) containing the membrane proton channel, linked together by a central stalk and a peripheral stalk. During catalysis, ATP synthesis in the catalytic domain of F(1) is coupled via a rotary mechanism of the central stalk subunits to proton translocation. Its function is as follows. Component of the F(0) channel, it forms part of the peripheral stalk, linking F(1) to F(0). The b'-subunit is a diverged and duplicated form of b found in plants and photosynthetic bacteria. The chain is ATP synthase subunit b 2 (atpF2) from Cereibacter sphaeroides (strain ATCC 17029 / ATH 2.4.9) (Rhodobacter sphaeroides).